The following is a 779-amino-acid chain: Endonuclease MutS2 (779 aa).

Position 328–335 (328–335) interacts with ATP; that stretch reads GPNTGGKT. The Smr domain maps to 704–779; that stretch reads LDLRGKRYEE…GSGATIVTLG (76 aa).

This sequence belongs to the DNA mismatch repair MutS family. MutS2 subfamily. As to quaternary structure, homodimer. Binds to stalled ribosomes, contacting rRNA.

Functionally, endonuclease that is involved in the suppression of homologous recombination and thus may have a key role in the control of bacterial genetic diversity. Acts as a ribosome collision sensor, splitting the ribosome into its 2 subunits. Detects stalled/collided 70S ribosomes which it binds and splits by an ATP-hydrolysis driven conformational change. Acts upstream of the ribosome quality control system (RQC), a ribosome-associated complex that mediates the extraction of incompletely synthesized nascent chains from stalled ribosomes and their subsequent degradation. Probably generates substrates for RQC. In Streptococcus agalactiae serotype III (strain NEM316), this protein is Endonuclease MutS2.